Consider the following 514-residue polypeptide: Type-2 serine--tRNA ligase (514 aa).

Ala-313 is an L-serine binding site. Cys-315 provides a ligand contact to Zn(2+). An L-serine-binding site is contributed by Arg-344. Residues Arg-344 to Glu-346 and Arg-355 to Val-356 contribute to the ATP site. Arg-361–Glu-363 provides a ligand contact to L-serine. Zn(2+) contacts are provided by Glu-363 and Cys-470. Residue Arg-477 participates in ATP binding.

It belongs to the class-II aminoacyl-tRNA synthetase family. Type-2 seryl-tRNA synthetase subfamily. In terms of assembly, homodimer. Zn(2+) is required as a cofactor.

The protein localises to the cytoplasm. The enzyme catalyses tRNA(Ser) + L-serine + ATP = L-seryl-tRNA(Ser) + AMP + diphosphate + H(+). It carries out the reaction tRNA(Sec) + L-serine + ATP = L-seryl-tRNA(Sec) + AMP + diphosphate + H(+). It participates in aminoacyl-tRNA biosynthesis; selenocysteinyl-tRNA(Sec) biosynthesis; L-seryl-tRNA(Sec) from L-serine and tRNA(Sec): step 1/1. Its function is as follows. Catalyzes the attachment of serine to tRNA(Ser). Is also able to aminoacylate tRNA(Sec) with serine, to form the misacylated tRNA L-seryl-tRNA(Sec), which will be further converted into selenocysteinyl-tRNA(Sec). This is Type-2 serine--tRNA ligase (serS) from Methanococcus maripaludis (strain DSM 14266 / JCM 13030 / NBRC 101832 / S2 / LL).